Here is a 248-residue protein sequence, read N- to C-terminus: Uridylate kinase (248 aa).

An ATP-binding site is contributed by Lys13–Gly16. Gly55 contacts UMP. ATP-binding residues include Gly56 and Arg60. Residues Asp75 and Thr136–Thr143 each bind UMP. Residues Thr163, Tyr169, and Asp172 each coordinate ATP.

Belongs to the UMP kinase family. In terms of assembly, homohexamer.

It is found in the cytoplasm. It catalyses the reaction UMP + ATP = UDP + ADP. It functions in the pathway pyrimidine metabolism; CTP biosynthesis via de novo pathway; UDP from UMP (UMPK route): step 1/1. With respect to regulation, inhibited by UTP. Its function is as follows. Catalyzes the reversible phosphorylation of UMP to UDP. This Leptospira interrogans serogroup Icterohaemorrhagiae serovar copenhageni (strain Fiocruz L1-130) protein is Uridylate kinase.